Reading from the N-terminus, the 303-residue chain is N-acetyl-D-glucosamine kinase (303 aa).

Residues 4–11 and 133–140 each bind ATP; these read GFDIGGSK and GVGGGLIV. Zn(2+) contacts are provided by histidine 157, cysteine 177, cysteine 179, and cysteine 184.

The protein belongs to the ROK (NagC/XylR) family. NagK subfamily.

The enzyme catalyses N-acetyl-D-glucosamine + ATP = N-acetyl-D-glucosamine 6-phosphate + ADP + H(+). It functions in the pathway cell wall biogenesis; peptidoglycan recycling. Its function is as follows. Catalyzes the phosphorylation of N-acetyl-D-glucosamine (GlcNAc) derived from cell-wall degradation, yielding GlcNAc-6-P. In Erwinia tasmaniensis (strain DSM 17950 / CFBP 7177 / CIP 109463 / NCPPB 4357 / Et1/99), this protein is N-acetyl-D-glucosamine kinase.